A 127-amino-acid polypeptide reads, in one-letter code: Large ribosomal subunit protein bL12 (127 aa).

It belongs to the bacterial ribosomal protein bL12 family. In terms of assembly, homodimer. Part of the ribosomal stalk of the 50S ribosomal subunit. Forms a multimeric L10(L12)X complex, where L10 forms an elongated spine to which 2 to 4 L12 dimers bind in a sequential fashion. Binds GTP-bound translation factors.

Its function is as follows. Forms part of the ribosomal stalk which helps the ribosome interact with GTP-bound translation factors. Is thus essential for accurate translation. The polypeptide is Large ribosomal subunit protein bL12 (Carboxydothermus hydrogenoformans (strain ATCC BAA-161 / DSM 6008 / Z-2901)).